The primary structure comprises 2169 residues: Voltage-dependent L-type calcium channel subunit alpha-1C (2169 aa).

Residues 1-153 are Cytoplasmic-facing; sequence MVPLVQPTTP…RACISIVEWK (153 aa). Residues 76–97 are calmodulin-binding; it reads GAALSWQAAIDAGRQAKLMGSA. Over residues 98-108 the composition is skewed to polar residues; the sequence is GNTTISTVSST. Residues 98–127 form a disordered region; that stretch reads GNTTISTVSSTQRKRQQYGKPKKQSGTTAT. The segment covering 109–120 has biased composition (basic residues); that stretch reads QRKRQQYGKPKK. The stretch at 140-437 is one I repeat; the sequence is NPIRRACISI…LVLGVLSGEF (298 aa). The helical transmembrane segment at 154–172 threads the bilayer; sequence PFEIIILLTIFANCVALAI. Topologically, residues 173 to 187 are extracellular; that stretch reads YIPFPEDDSNATNSN. The N-linked (GlcNAc...) asparagine glycan is linked to N182. A helical membrane pass occupies residues 188-208; the sequence is LERVEYLFLIIFTVEAFLKVI. The Cytoplasmic segment spans residues 209-217; sequence AYGLLFHPN. A helical membrane pass occupies residues 218-238; sequence AYLRNGWNLLDFIIVVVGLFS. Residues 239–261 are Extracellular-facing; it reads AILEQATKADGANALGGKGAGFD. Residues 262–280 form a helical membrane-spanning segment; that stretch reads VKALRAFRVLRPLRLVSGV. Residues 281–297 lie on the Cytoplasmic side of the membrane; that stretch reads PSLQVVLNSIIKAMVPL. A helical transmembrane segment spans residues 298–319; it reads LHTALLVLFVIIIYAIIGLELF. Topologically, residues 320-379 are extracellular; the sequence is MGKMHKTCYNQEGITDVPAEEDPSPCALESGHGRQCQNGTVCKPGWDGPKHGITNFDNFA. A disulfide bridge links C345 with C361. N-linked (GlcNAc...) asparagine glycosylation occurs at N357. Residues 380 to 401 constitute an intramembrane region (pore-forming); the sequence is FAMLTVFQCITMEGWTDVLYWM. The Selectivity filter of repeat I signature appears at 390–393; the sequence is TMEG. E392 contributes to the Ca(2+) binding site. Over 402 to 409 the chain is Extracellular; it reads QDAMGYEL. The chain crosses the membrane as a helical span at residues 410–430; that stretch reads PWVYFVSLVIFGSFFVLNLVL. Topologically, residues 431-553 are cytoplasmic; sequence GVLSGEFSKE…RKCRAAVKSN (123 aa). Residues 457 to 474 form an AID/alpha-interaction domain; mediates interaction with the beta subunit region; the sequence is QQLEEDLKGYLDWITQAE. Residues 478–510 form a disordered region; sequence PENEDEGVDEEKPRNMSMPTSETESVNTENVAG. Residues 494–507 are compositionally biased toward polar residues; that stretch reads SMPTSETESVNTEN. Residue S498 is modified to Phosphoserine. T505 bears the Phosphothreonine mark. The II repeat unit spans residues 539–785; that stretch reads NRFCRRKCRA…VFLAIAVDNL (247 aa). The chain crosses the membrane as a helical span at residues 554–572; it reads VFYWLVIFLVFLNTLTIAS. The Extracellular portion of the chain corresponds to 573-583; the sequence is EHYNQPHWLTE. Residues 584–604 traverse the membrane as a helical segment; it reads VQDTANKALLALFTAEMLLKM. At 605-615 the chain is on the cytoplasmic side; sequence YSLGLQAYFVS. The chain crosses the membrane as a helical span at residues 616 to 635; it reads LFNRLDCFIVCGGILETILV. Topologically, residues 636-644 are extracellular; sequence ETKIMSPLG. The helical transmembrane segment at 645–663 threads the bilayer; the sequence is ISVLRCVRLLRIFKITRYW. Topologically, residues 664–682 are cytoplasmic; sequence NSLSNLVASLLNSVRSIAS. Residues 683 to 702 traverse the membrane as a helical segment; the sequence is LLLLLFLFIIIFSLLGMQLF. The Extracellular portion of the chain corresponds to 703 to 722; it reads GGKFNFDEMRTRRSTFDNFP. Positions 723–744 form an intramembrane region, pore-forming; the sequence is QSLLTVFQILTGEDWNSVMYDG. Residues 733–736 carry the Selectivity filter of repeat II motif; the sequence is TGED. Residue E735 coordinates Ca(2+). Over 745-754 the chain is Extracellular; that stretch reads IMAYGGPSFP. Residues 755–774 traverse the membrane as a helical segment; sequence GMLVCIYFIILFICGNYILL. The Cytoplasmic portion of the chain corresponds to 775 to 929; that stretch reads NVFLAIAVDN…LQCHRIVNDT (155 aa). The interval 793–890 is disordered; it reads SAQKEEEEEK…EMPVGPRPRP (98 aa). Residues 812-835 are compositionally biased toward basic and acidic residues; the sequence is SPEKKQEVVEKPAVEETKEEKIEL. S837 and S844 each carry phosphoserine. Residues 858–905 form an interaction with STAC2 region; sequence NENEDKSPYPNPDAAGEEDEEEPEMPVGPRPRPLSELHLKEKAVPMPE. Acidic residues predominate over residues 872 to 881; that stretch reads AGEEDEEEPE. An III repeat occupies 916-1198; the sequence is NRFRLQCHRI…IFVGFVIVTF (283 aa). The helical transmembrane segment at 930–948 threads the bilayer; that stretch reads IFTNLILFFILLSSISLAA. Residues 949-960 lie on the Extracellular side of the membrane; sequence EDPVQHTSFRNH. A helical membrane pass occupies residues 961–980; it reads ILFYFDIVFTTIFTIEIALK. Residues 981–996 are Cytoplasmic-facing; sequence MTAYGAFLHKGSFCRN. Residues 997-1015 traverse the membrane as a helical segment; that stretch reads YFNILDLLVVSVSLISFGI. Residues 1016–1022 lie on the Extracellular side of the membrane; the sequence is QSSAINV. The chain crosses the membrane as a helical span at residues 1023 to 1041; the sequence is VKILRVLRVLRPLRAINRA. Over 1042–1060 the chain is Cytoplasmic; that stretch reads KGLKHVVQCVFVAIRTIGN. A helical membrane pass occupies residues 1061–1080; that stretch reads IVIVTTLLQFMFACIGVQLF. Residues 1081-1130 lie on the Extracellular side of the membrane; the sequence is KGKLYTCSDSSKQTEAECKGNYITYKDGEVDQPIIQPRSWENSKFDFDNV. C1087 and C1098 are oxidised to a cystine. The interval 1118-1207 is dihydropyridine binding; it reads RSWENSKFDF…FQEQGEQEYK (90 aa). Residues 1131 to 1151 constitute an intramembrane region (pore-forming); it reads LAAMMALFTVSTFEGWPELLY. The short motif at 1142–1145 is the Selectivity filter of repeat III element; that stretch reads TFEG. A Ca(2+)-binding site is contributed by E1144. Residues 1152-1168 are Extracellular-facing; the sequence is RSIDSHTEDKGPIYNYR. A helical membrane pass occupies residues 1169–1190; the sequence is VEISIFFIIYIIIIAFFMMNIF. Residues 1191–1248 lie on the Cytoplasmic side of the membrane; it reads VGFVIVTFQEQGEQEYKNCELDKNQRQCVEYALKARPLRRYIPKNQHQYKVWYVVNST. The IV repeat unit spans residues 1235-1508; the sequence is NQHQYKVWYV…LFVAVVMDNF (274 aa). The helical transmembrane segment at 1249-1270 threads the bilayer; the sequence is YFEYLMFVLILLNTICLAMQHY. At 1271-1278 the chain is on the extracellular side; sequence GQSCLFKI. A helical membrane pass occupies residues 1279–1300; that stretch reads AMNILNMLFTGLFTVEMILKLI. Topologically, residues 1301-1310 are cytoplasmic; the sequence is AFKPKHYFCD. A helical membrane pass occupies residues 1311–1330; the sequence is AWNTFDALIVVGSIVDIAIT. Topologically, residues 1331 to 1353 are extracellular; it reads EVNPAEHTQCSPSMNAEENSRIS. A helical transmembrane segment spans residues 1354 to 1372; it reads ITFFRLFRVMRLVKLLSRG. Over 1373–1390 the chain is Cytoplasmic; sequence EGIRTLLWTFIKSFQALP. The chain crosses the membrane as a helical span at residues 1391–1411; sequence YVALLIVMLFFIYAVIGMQVF. At 1412–1433 the chain is on the extracellular side; sequence GKIALNDTTEINRNNNFQTFPQ. A glycan (N-linked (GlcNAc...) asparagine) is linked at N1417. An intramembrane region (pore-forming) is located at residues 1434-1452; that stretch reads AVLLLFRCATGEAWQDIML. The Selectivity filter of repeat IV signature appears at 1443–1446; sequence TGEA. Over 1453 to 1480 the chain is Extracellular; sequence ACMPGKKCAPESDPSNSTEGETPCGSSF. The interval 1459-1527 is dihydropyridine binding; that stretch reads KCAPESDPSN…LGPHHLDEFK (69 aa). A disulfide bridge connects residues C1460 and C1476. The N-linked (GlcNAc...) asparagine glycan is linked to N1468. The interval 1473 to 1515 is phenylalkylamine binding; it reads ETPCGSSFAVFYFISFYMLCAFLIINLFVAVVMDNFDYLTRDW. Residues 1481–1505 traverse the membrane as a helical segment; sequence AVFYFISFYMLCAFLIINLFVAVVM. Residues 1506–2169 lie on the Cytoplasmic side of the membrane; that stretch reads DNFDYLTRDW…ADSRVHVRSL (664 aa). The important for interaction with STAC1, STAC2 and STAC3 stretch occupies residues 1640–1667; sequence DEVTVGKFYATFLIQEYFRKFKKRKEQG. Residues 1646–1666 are calmodulin-binding IQ region; sequence KFYATFLIQEYFRKFKKRKEQ. The tract at residues 1680 to 1699 is important for localization in at the junctional membrane; it reads LQAGLRTLHDIGPEIRRAIS. Residues S1699 and S1720 each carry the phosphoserine modification. Disordered regions lie at residues 1761–1793 and 1894–1920; these read KAGN…TGSN and ENRQ…LRSA. Polar residues predominate over residues 1780-1792; sequence STFTPSSYSSTGS. The span at 1894–1910 shows a compositional bias: basic and acidic residues; it reads ENRQLTPPEEDKGDTRP. Position 1927 is a phosphoserine (S1927).

This sequence belongs to the calcium channel alpha-1 subunit (TC 1.A.1.11) family. CACNA1C subfamily. Component of a calcium channel complex consisting of a pore-forming alpha subunit (CACNA1C) and ancillary beta, gamma and delta subunits. The channel complex contains alpha, beta, gamma and delta subunits in a 1:1:1:1 ratio, i.e. it contains only one of each type of subunit. CACNA1C channel activity is modulated by ancillary subunits, such as CACNB1, CACNB2, CACNB3, CACNA2D1 and CACNA2D4. Interacts with CACNB1. Interacts with CACNB2. Identified in a complex with CACNA2D4 and CACNB3. Interacts with CACNB3. Interacts with CACNA2D1. Interacts with CACNA2D4. Interacts with the gamma subunits CACNG4, CACNG6, CACNG7 and CACNG8. Interacts with CALM1. Interacts (via the N-terminus and the C-terminal C and IQ motifs) with CABP1; this inhibits Ca(2+)-dependent channel inactivation. The binding via the C motif is calcium independent whereas the binding via IQ requires the presence of calcium and is mutually exclusive with calmodulin binding. The binding to the cytoplasmic N-terminal domain is calcium independent but is essential for the channel modulation. Interacts (via C-terminal CDB motif) with CABP5; in a calcium-dependent manner. Interacts with CIB1; the interaction increases upon cardiomyocytes hypertrophy. Interacts with STAC2 and STAC3; this inhibits channel inactivation. Post-translationally, phosphorylation by PKA at Ser-1927 activates the channel. Elevated levels of blood glucose lead to increased phosphorylation by PKA. In terms of tissue distribution, expressed in heart. Expressed in uterus.

It localises to the cell membrane. The protein resides in the sarcolemma. Its subcellular location is the perikaryon. The protein localises to the postsynaptic density membrane. It is found in the cell projection. It localises to the dendrite. The protein resides in the T-tubule. The catalysed reaction is Ca(2+)(in) = Ca(2+)(out). Its activity is regulated as follows. Inhibited by dihydropyridines (DHP), such as isradipine. Inhibited by nifedipine. Channel activity is regulated by Ca(2+) and calmodulin. Binding of STAC1, STAC2 or STAC3 to a region that overlaps with the calmodulin binding site inhibits channel inactivation by Ca(2+) and calmodulin. Binding of calmodulin or CABP1 at the same regulatory sites results in opposite effects on the channel function. Shear stress and pressure increases calcium channel activity. In terms of biological role, pore-forming, alpha-1C subunit of the voltage-gated calcium channel that gives rise to L-type calcium currents. Mediates influx of calcium ions into the cytoplasm, and thereby triggers calcium release from the sarcoplasm. Plays an important role in excitation-contraction coupling in the heart. Required for normal heart development and normal regulation of heart rhythm. Required for normal contraction of smooth muscle cells in blood vessels and in the intestine. Essential for normal blood pressure regulation via its role in the contraction of arterial smooth muscle cells. Long-lasting (L-type) calcium channels belong to the 'high-voltage activated' (HVA) group. The chain is Voltage-dependent L-type calcium channel subunit alpha-1C (CACNA1C) from Cavia porcellus (Guinea pig).